The following is a 514-amino-acid chain: Anthranilate synthase component 1 (514 aa).

L-tryptophan is bound by residues T40 and 290–292 (PYM). 327–328 (GT) serves as a coordination point for chorismate. E360 contributes to the Mg(2+) binding site. Chorismate is bound by residues Y448, R468, 482–484 (GAG), and G484. E497 lines the Mg(2+) pocket.

It belongs to the anthranilate synthase component I family. In terms of assembly, heterotetramer consisting of two non-identical subunits: a beta subunit (TrpG) and a large alpha subunit (TrpE). Requires Mg(2+) as cofactor.

It catalyses the reaction chorismate + L-glutamine = anthranilate + pyruvate + L-glutamate + H(+). Its pathway is amino-acid biosynthesis; L-tryptophan biosynthesis; L-tryptophan from chorismate: step 1/5. Its activity is regulated as follows. Feedback inhibited by tryptophan. Functionally, part of a heterotetrameric complex that catalyzes the two-step biosynthesis of anthranilate, an intermediate in the biosynthesis of L-tryptophan. In the first step, the glutamine-binding beta subunit (TrpG) of anthranilate synthase (AS) provides the glutamine amidotransferase activity which generates ammonia as a substrate that, along with chorismate, is used in the second step, catalyzed by the large alpha subunit of AS (TrpE) to produce anthranilate. In the absence of TrpG, TrpE can synthesize anthranilate directly from chorismate and high concentrations of ammonia. The protein is Anthranilate synthase component 1 (trpE) of Buchnera aphidicola subsp. Rhopalosiphum padi.